Here is a 134-residue protein sequence, read N- to C-terminus: Antifungal protein ginkbilobin-2 (134 aa).

Residues 1-26 (MKTMRMNSAFILAFALAAAMLILTEA) form the signal peptide. A Gnk2-homologous domain is found at 29 to 134 (TAFVSSACNT…CFIQYEQRSF (106 aa)). 3 disulfide bridges follow: Cys36–Cys112, Cys88–Cys97, and Cys100–Cys125. Position 37 (Asn37) interacts with alpha-D-mannopyranose. Alpha-D-mannopyranose-binding residues include Arg119 and Glu130.

In terms of assembly, binds actin in vitro.

It is found in the secreted. Functionally, possesses antifungal activity against F.oxysporum, T.reesei and C.albicans. Weakly inhibits the aspartic acid protease pepsin activity. Exerts antifungal activity against S.cerevisiae and F.culmorum through its carbohydrate-binding specificity. Acts as a lectin that stricly recognizes alpha-1,2-linked mannose moieties and interacts with the yeast cell wall mannan polysaccharide. Can interfere with the fungal actin remodeling resulting to the activation of an actin-dependent cell death. This is Antifungal protein ginkbilobin-2 from Ginkgo biloba (Ginkgo).